The primary structure comprises 65 residues: Conotoxin Am6.4 (65 aa).

Residues 1–33 (STGKRNAGKLTVTDDVEADRDTDPDDKDPSVHN) are disordered. A propeptide spanning residues 1–36 (STGKRNAGKLTVTDDVEADRDTDPDDKDPSVHNSWR) is cleaved from the precursor. The segment covering 14–26 (DDVEADRDTDPDD) has biased composition (acidic residues). Cystine bridges form between Cys40-Cys50, Cys45-Cys59, and Cys49-Cys64.

Post-translationally, is not hydroxylated. As to expression, expressed by the venom duct.

It is found in the secreted. Its function is as follows. Probable toxin that inhibits ion channels. This Conus amadis (Amadis cone) protein is Conotoxin Am6.4.